The chain runs to 314 residues: Citrate/oxoglutarate carrier protein (314 aa).

Solcar repeat units follow at residues 18 to 100 (VSFS…EAEY), 107 to 199 (LNNF…VEDG), and 217 to 301 (EKIG…AKEF). A run of 5 helical transmembrane segments spans residues 23–44 (ILLG…LEVV), 77–97 (IPWA…VSAE), 111–127 (ASGI…QAYL), 178–198 (VAIR…LVED), and 218–238 (KIGA…IEVI). Residues 246–259 (KEDPNRPKNLTVGK) mediate DNA binding. Residues 273 to 294 (LYRGVTPRIGLGIWQTVFMVGF) form a helical membrane-spanning segment.

The protein belongs to the mitochondrial carrier (TC 2.A.29) family.

The protein localises to the mitochondrion inner membrane. The protein resides in the mitochondrion matrix. It is found in the mitochondrion nucleoid. With respect to regulation, strongly inhibited by mersalyl, p-chloromercuribenzenesulfonate, mercuric chloride, N-ethylmaleimide, pyridoxal 5'-phosphate, bathophenanthroline, and tannic acid. Partially inhibited by alpha-cyanocinnamate and bromescol purple. Weakly inhibited by butylmalonate and phenylsuccinate. Not inhibited by 1,2,3-benzenetricarboxylate or carboxyatractyloside. Its function is as follows. Mitochondrial antiporter which catalyzes the transport of citrate and oxoglutarate across the membrane. Also shows specificity for oxaloacetate, and to a lesser extent succinate and fumarate. Transports isocitrate, cis-aconitate and L-malate with very low efficiency. Does not show uniporter activity. Helps to maintain normal citrate levels and NADPH/NADP(+) ratios under conditions of oxidative stress. In addition, associates with the mitochondrial nucleoid and binds DNA in vitro, although the relevance of these data in vivo is unclear. This is Citrate/oxoglutarate carrier protein (YHM2) from Saccharomyces cerevisiae (strain ATCC 204508 / S288c) (Baker's yeast).